The chain runs to 149 residues: Large-conductance mechanosensitive channel (149 aa).

The next 2 membrane-spanning stretches (helical) occupy residues 14-34 (VVDMAVGIIVGGAFGKLVNTL) and 85-105 (GLFINAMISFIIMAFAVYLLV).

This sequence belongs to the MscL family. Homopentamer.

Its subcellular location is the cell inner membrane. Its function is as follows. Channel that opens in response to stretch forces in the membrane lipid bilayer. May participate in the regulation of osmotic pressure changes within the cell. The protein is Large-conductance mechanosensitive channel of Chlorobium phaeovibrioides (strain DSM 265 / 1930) (Prosthecochloris vibrioformis (strain DSM 265)).